Here is a 259-residue protein sequence, read N- to C-terminus: 1,2-dihydroxy-1,2-dihydronaphthalene dehydrogenase (259 aa).

NAD(+) contacts are provided by residues 8-35 and aspartate 58; that span reads AITG…SALV. Residue serine 140 participates in substrate binding. Tyrosine 153 functions as the Proton acceptor in the catalytic mechanism. Lysine 157 is an NAD(+) binding site.

The protein belongs to the short-chain dehydrogenases/reductases (SDR) family.

The catalysed reaction is (1R,2S)-1,2-dihydronaphthalene-1,2-diol + NAD(+) = naphthalene-1,2-diol + NADH + H(+). The protein operates within aromatic compound metabolism; naphthalene degradation. Catalyzes the oxidation of naphthalene dihydrodiol into 1,2-dihydroxynaphthalene. In Ralstonia sp, this protein is 1,2-dihydroxy-1,2-dihydronaphthalene dehydrogenase.